Reading from the N-terminus, the 203-residue chain is MGNCFVKKISSDIFNSNYQMLYSELSEQEDLLDFLETKYTDFGILKTDILNYERDSETFKTLLQVLPIYKKTKLRYNLIERCLNNCPPHVKDALIIEIMKAKKILETLDVVFMKIMIGEFTICSDNVNQLLNKFSIDQTTLCDMEKINTLIDLDEENSKRLLTEIDPLLHQETGLYQALPNAVTDPPSEQRAATKKCYEGFTK.

A lipid anchor (S-palmitoyl cysteine; by host) is attached at Cys4.

It belongs to the herpesviridae UL51 family. In terms of assembly, oligomerizes. Interacts with U75; this interaction mediates U75 incorporation to virions. Post-translationally, phosphorylated. In terms of processing, palmitoylation is necessary for Golgi localization.

The protein resides in the virion tegument. Its subcellular location is the host cytoplasm. It localises to the host Golgi apparatus. In terms of biological role, plays several roles during the time course of infection, including egress of virus particles from the perinuclear space and secondary envelopment of cytoplasmic capsids that bud into specific trans-Golgi network (TGN)-derived membranes. The polypeptide is Tegument protein UL51 homolog (U44) (Homo sapiens (Human)).